A 792-amino-acid polypeptide reads, in one-letter code: Cadherin-11 (792 aa).

An N-terminal signal peptide occupies residues 1-22; sequence MKEDNCLHAALICLGMLYYSHA. Positions 23 to 53 are excised as a propeptide; sequence ITTEKLNHVRPSLHGHHEKGKEGQVLHRSKR. 5 consecutive Cadherin domains span residues 54 to 159, 160 to 268, 269 to 383, 384 to 486, and 487 to 608; these read GWVW…PPEF, LHEN…PPKF, PQSV…PPVF, LKPS…DNAP, and KFAA…YILN. The Extracellular segment spans residues 54–613; the sequence is GWVWNQFFVI…AYILNAGLST (560 aa). N-linked (GlcNAc...) asparagine glycosylation is found at asparagine 455, asparagine 536, and asparagine 594. Residues 614-634 form a helical membrane-spanning segment; sequence GALIAILACIVILLVIVVLFV. The Cytoplasmic portion of the chain corresponds to 635–792; that stretch reads TLKRQKKEPL…GSKDTFDDDS (158 aa).

It is found in the cell membrane. Functionally, cadherins are calcium-dependent cell adhesion proteins. They preferentially interact with themselves in a homophilic manner in connecting cells; cadherins may thus contribute to the sorting of heterogeneous cell types. Required for proper focal adhesion assembly. Involved in the regulation of cell migration. The sequence is that of Cadherin-11 (CDH11) from Gallus gallus (Chicken).